The primary structure comprises 119 residues: Large ribosomal subunit protein bL20 (119 aa).

This sequence belongs to the bacterial ribosomal protein bL20 family.

In terms of biological role, binds directly to 23S ribosomal RNA and is necessary for the in vitro assembly process of the 50S ribosomal subunit. It is not involved in the protein synthesizing functions of that subunit. The sequence is that of Large ribosomal subunit protein bL20 from Lactococcus lactis subsp. cremoris (strain MG1363).